A 403-amino-acid chain; its full sequence is Acetate kinase (403 aa).

Asn-7 provides a ligand contact to Mg(2+). Lys-14 provides a ligand contact to ATP. Arg-95 is a binding site for substrate. The active-site Proton donor/acceptor is Asp-152. Residues 212-216, 286-288, and 335-339 contribute to the ATP site; these read HLGNG, DMR, and GIGEN. Glu-389 serves as a coordination point for Mg(2+).

This sequence belongs to the acetokinase family. In terms of assembly, homodimer. The cofactor is Mg(2+). Requires Mn(2+) as cofactor.

The protein localises to the cytoplasm. The enzyme catalyses acetate + ATP = acetyl phosphate + ADP. The protein operates within metabolic intermediate biosynthesis; acetyl-CoA biosynthesis; acetyl-CoA from acetate: step 1/2. Catalyzes the formation of acetyl phosphate from acetate and ATP. Can also catalyze the reverse reaction. The protein is Acetate kinase of Desulfovibrio desulfuricans (strain ATCC 27774 / DSM 6949 / MB).